A 318-amino-acid chain; its full sequence is Deoxymugineic acid synthase 1 (318 aa).

Residue D48 coordinates NADP(+). The active-site Proton donor is the Y53. H116 is a binding site for substrate. NADP(+)-binding positions include 162-163, Q184, 262-270, and 277-285; these read CN, FDEARMREN, and ELTEEERQR.

Belongs to the aldo/keto reductase family. As to expression, confined to cells participating in long distance transport (e.g. in the parts of pericycle cells adjacent to the protoxylem and metaxylem) in roots and to vascular bundles in shoots.

It catalyses the reaction 2'-deoxymugineate + NAD(+) = 3''-deamino-3''-oxonicotianamine + NADH + H(+). The catalysed reaction is 2'-deoxymugineate + NADP(+) = 3''-deamino-3''-oxonicotianamine + NADPH + H(+). The protein operates within siderophore biosynthesis. Functionally, catalyzes the reduction of a 3''-keto intermediate during the biosynthesis of 2'-deoxymugineic acid (DMA) from L-Met. Involved in the formation of phytosiderophores (MAs) belonging to the mugineic acid family and required to acquire iron. In Oryza sativa subsp. japonica (Rice), this protein is Deoxymugineic acid synthase 1.